Here is a 152-residue protein sequence, read N- to C-terminus: Immunity protein YobK (152 aa).

Interacts with cognate toxin YobL but not with non-cognate putative toxin YeeF. The interaction inhibits the toxic activity of YobL.

It localises to the cytoplasm. Functionally, immunity component of one of 6 LXG toxin-immunity modules in this strain. They promote kin selection, mediate competition in biofilms, and drive spatial segregation of different strains, indicating that LXG toxins may help avoid warfare between strains in biofilms. Mediates intercellular competition during biofilm formation; disruption of the operon disadvantages the bacteria, but overexpression of the cognate immunity protein restores growth in competition with wild-type. In situ neutralizes the toxic effect of cognate toxin YobL. Neutralizes the toxic activity of cognate toxin YobL upon expression in E.coli. Does not have immunity protein activity on other LXG toxins. This Bacillus subtilis (strain 168) protein is Immunity protein YobK (yobK).